The following is a 347-amino-acid chain: Transcription factor JunD (347 aa).

The segment at Met1 to Met46 is disordered. Residues Gly13 to Ser26 are compositionally biased toward gly residues. A Menin-binding motif (MBM) motif is present at residues Ser29–Ala41. The MAP kinase docking motif; essential for its phosphorylation signature appears at Lys48 to Ser57. Residues Ala63–Ala91 are disordered. Ser92 carries the phosphoserine modification. Ser102 is modified (phosphoserine; by MAPK8). Thr119 bears the Phosphothreonine mark. Disordered stretches follow at residues Ala164–Ala183 and Glu218–Asp264. The span at Val220 to Leu231 shows a compositional bias: pro residues. Phosphoserine occurs at positions 251, 255, and 259. Positions Arg268–Arg295 are basic motif. A bZIP domain is found at Arg268–His331. A leucine-zipper region spans residues Leu296 to Leu324.

The protein belongs to the bZIP family. Jun subfamily. Heterodimer; binds DNA as a heterodimer. Component of an AP-1 transcription factor complex composed of JUN-FOS heterodimers. As part of the AP-1 transcription factor complex, forms heterodimers with FOS proteins, thereby binding to the AP-1 consensus sequence and stimulating transcription. Forms heterodimers with FOSB; thereby binding to the AP-1 consensus sequence. Interacts (via MBM motif) with MEN1; this interaction represses transcriptional activation. Interacts with MAPK10; this interaction is inhibited in the presence of MEN1. In terms of processing, phosphorylated by MAP kinases MAPK8 and MAPK10; phosphorylation is inhibited in the presence of MEN1.

It localises to the nucleus. In terms of biological role, transcription factor binding AP-1 sites. Heterodimerizes with proteins of the FOS family to form an AP-1 transcription factor complex, thereby enhancing their DNA binding activity to an AP-1 consensus sequence 3'-TGA[GC]TCA-5' and enhancing their transcriptional activity. This chain is Transcription factor JunD (JUND), found in Bos taurus (Bovine).